Reading from the N-terminus, the 326-residue chain is MLIDGHGRTVDYLRVSVTERCNFRCQYCMPEKPFSWVPKENLLSFEELFLFMKVAMDEGVNKIRITGGEPLLREDLDSFIKMIHDYKPDIDLALTTNAYLLPQTAQKLKDAGLKRLNISLDSLKPEVAHQIAQKDVLGQVLKGIDKALEVGLGVKINMVPLKGINDNEILDVMEYCMDRNIKIRFIEYMENRHALEALKGMHGKEILSKVKEKYTIHALGREGASPSFNYTIEENGYEFGLIDPHKHDFCESCNRIRLTAEGFLIPCLYFDEALSIAEAVKKGDIEEASQVLATVLKDKPKENRWIEGELEEGQEVSSRAFYETGG.

The Radical SAM core domain maps to 5 to 227 (GHGRTVDYLR…ALGREGASPS (223 aa)). R14 lines the GTP pocket. 2 residues coordinate [4Fe-4S] cluster: C21 and C25. Y27 is a binding site for S-adenosyl-L-methionine. C28 is a [4Fe-4S] cluster binding site. R64 is a binding site for GTP. Residue G68 participates in S-adenosyl-L-methionine binding. T95 serves as a coordination point for GTP. S119 contributes to the S-adenosyl-L-methionine binding site. K155 contacts GTP. An S-adenosyl-L-methionine-binding site is contributed by M189. Positions 250 and 253 each coordinate [4Fe-4S] cluster. Residue 255 to 257 (RIR) participates in GTP binding. A [4Fe-4S] cluster-binding site is contributed by C267.

Belongs to the radical SAM superfamily. MoaA family. As to quaternary structure, monomer and homodimer. [4Fe-4S] cluster is required as a cofactor.

It carries out the reaction GTP + AH2 + S-adenosyl-L-methionine = (8S)-3',8-cyclo-7,8-dihydroguanosine 5'-triphosphate + 5'-deoxyadenosine + L-methionine + A + H(+). It functions in the pathway cofactor biosynthesis; molybdopterin biosynthesis. Functionally, catalyzes the cyclization of GTP to (8S)-3',8-cyclo-7,8-dihydroguanosine 5'-triphosphate. The polypeptide is GTP 3',8-cyclase (Sulfurovum sp. (strain NBC37-1)).